The primary structure comprises 384 residues: UPF0496 protein At3g28310/At3g28320 (384 aa).

The stretch at Gln184–Ala215 forms a coiled coil. The next 2 membrane-spanning stretches (helical) occupy residues Ile217–Leu237 and Val242–Val262. A coiled-coil region spans residues Val264 to Thr361.

It belongs to the UPF0496 family.

The protein localises to the membrane. The protein is UPF0496 protein At3g28310/At3g28320 of Arabidopsis thaliana (Mouse-ear cress).